The following is a 130-amino-acid chain: Fumarate reductase subunit D (130 aa).

Transmembrane regions (helical) follow at residues 35-55, 67-87, and 110-130; these read FAMI…LGVI, SFAT…LPMW, and IACY…IFMI.

It belongs to the FrdD family. As to quaternary structure, part of an enzyme complex containing four subunits: a flavoprotein (FrdA), an iron-sulfur protein (FrdB), and two hydrophobic anchor proteins (FrdC and FrdD).

It localises to the cell inner membrane. Anchors the catalytic components of the fumarate reductase complex to the cell membrane, binds quinones. The sequence is that of Fumarate reductase subunit D from Vibrio cholerae serotype O1 (strain M66-2).